Consider the following 409-residue polypeptide: Z-DNA-binding protein 1 (409 aa).

Z-binding domains are found at residues Leu-8–Gly-70 and Ser-85–Arg-147. Glycyl lysine isopeptide (Lys-Gly) (interchain with G-Cter in ubiquitin) cross-links involve residues Lys-17 and Lys-43. The segment at Ser-59–Ala-87 is disordered. 2 short sequence motifs (RIP homotypic interaction motif (RHIM)) span residues Asn-183 to Ile-207 and Leu-241 to Asp-265. Disordered regions lie at residues His-269–Thr-307 and Gly-323–Asp-369. Over residues Pro-270–Ala-290 the composition is skewed to low complexity. The segment covering Gly-337 to Thr-351 has biased composition (basic and acidic residues).

As to quaternary structure, homodimer. Interacts (via RIP homotypic interaction motif) with RIPK3; leading to RIPK3 activation and necroptosis; interaction is enhanced by CASP6. Interacts (via RIP homotypic interaction motif) with RIPK1. Component of the AIM2 PANoptosome complex, a multiprotein complex that drives inflammatory cell death (PANoptosis). In terms of processing, ubiquitinated; polyubiquitinated following influenza A virus (IAV) infection. Phosphorylated.

Its subcellular location is the cytoplasm. It localises to the nucleus. Its activity is regulated as follows. ZBP1-dependent necroptosis is normally inhibited by RIPK1: RIPK1 inhibits the ZBP1-induced activation of RIPK3 via FADD-mediated recruitment of CASP8, which cleaves RIPK1 and limits TNF-induced necroptosis. Key innate sensor that recognizes and binds Z-RNA structures, which are produced by a number of viruses, such as herpesvirus, orthomyxovirus or flavivirus, and triggers different forms of cell death. ZBP1 acts as an essential mediator of pyroptosis, necroptosis and apoptosis (PANoptosis), an integral part of host defense against pathogens, by activating RIPK3, caspase-8 (CASP8), and the NLRP3 inflammasome. Key activator of necroptosis, a programmed cell death process in response to death-inducing TNF-alpha family members, via its ability to bind Z-RNA: once activated upon Z-RNA-binding, ZBP1 interacts and stimulates RIPK3 kinase, which phosphorylates and activates MLKL, triggering execution of programmed necrosis. In addition to TNF-induced necroptosis, necroptosis can also take place in the nucleus in response to orthomyxoviruses infection: ZBP1 recognizes and binds Z-RNA structures that are produced in infected nuclei by orthomyxoviruses, such as the influenza A virus (IAV), leading to ZBP1 activation, RIPK3 stimulation and subsequent MLKL phosphorylation, triggering disruption of the nuclear envelope and leakage of cellular DNA into the cytosol. ZBP1-dependent cell death in response to IAV infection promotes interleukin-1 alpha (IL1A) induction in an NLRP3-inflammasome-independent manner: IL1A expression is required for the optimal interleukin-1 beta (IL1B) production, and together, these cytokines promote infiltration of inflammatory neutrophils to the lung, leading to the formation of neutrophil extracellular traps. In addition to its direct role in driving necroptosis via its ability to sense Z-RNAs, also involved in PANoptosis triggered in response to bacterial infection: component of the AIM2 PANoptosome complex, a multiprotein complex that triggers PANoptosis. Also acts as the apical sensor of fungal infection responsible for activating PANoptosis. Involved in CASP8-mediated cell death via its interaction with RIPK1 but independently of its ability to sense Z-RNAs. In some cell types, also able to restrict viral replication by promoting cell death-independent responses. In response to flavivirus infection in neurons, promotes a cell death-independent pathway that restricts viral replication: together with RIPK3, promotes a death-independent transcriptional program that modifies the cellular metabolism via up-regulation expression of the enzyme ACOD1/IRG1 and production of the metabolite itaconate. Itaconate inhibits the activity of succinate dehydrogenase, generating a metabolic state in neurons that suppresses replication of viral genomes. This chain is Z-DNA-binding protein 1, found in Rattus norvegicus (Rat).